The primary structure comprises 194 residues: Inosine triphosphate pyrophosphatase (194 aa).

11–16 (TGNAKK) contributes to the ITP binding site. E39 provides a ligand contact to Mg(2+). ITP-binding positions include K51, 67–68 (DT), K84, 143–146 (FGWD), K166, and 171–172 (HR).

Belongs to the HAM1 NTPase family. In terms of assembly, homodimer. Mg(2+) serves as cofactor. Mn(2+) is required as a cofactor.

Its subcellular location is the cytoplasm. The catalysed reaction is ITP + H2O = IMP + diphosphate + H(+). It catalyses the reaction dITP + H2O = dIMP + diphosphate + H(+). It carries out the reaction XTP + H2O = XMP + diphosphate + H(+). In terms of biological role, pyrophosphatase that hydrolyzes non-canonical purine nucleotides such as inosine triphosphate (ITP), deoxyinosine triphosphate (dITP) or xanthosine 5'-triphosphate (XTP) to their respective monophosphate derivatives. The enzyme does not distinguish between the deoxy- and ribose forms. Probably excludes non-canonical purines from RNA and DNA precursor pools, thus preventing their incorporation into RNA and DNA and avoiding chromosomal lesions. This is Inosine triphosphate pyrophosphatase (itpa) from Dictyostelium discoideum (Social amoeba).